The primary structure comprises 80 residues: UPF0180 protein BPUM_1317 (80 aa).

Belongs to the UPF0180 family.

The sequence is that of UPF0180 protein BPUM_1317 from Bacillus pumilus (strain SAFR-032).